A 265-amino-acid polypeptide reads, in one-letter code: Undecaprenyl-diphosphatase (265 aa).

Transmembrane regions (helical) follow at residues 42 to 62, 90 to 110, 115 to 135, 160 to 182, 195 to 215, 222 to 242, and 245 to 265; these read EAIP…IVYF, ISFL…LLLF, VEIS…VTGI, VAQG…ALLL, FLMS…MGMV, IVGL…FLKV, and KVDF…TMFL.

It belongs to the UppP family.

Its subcellular location is the cell membrane. It carries out the reaction di-trans,octa-cis-undecaprenyl diphosphate + H2O = di-trans,octa-cis-undecaprenyl phosphate + phosphate + H(+). In terms of biological role, catalyzes the dephosphorylation of undecaprenyl diphosphate (UPP). The sequence is that of Undecaprenyl-diphosphatase from Methanococcoides burtonii (strain DSM 6242 / NBRC 107633 / OCM 468 / ACE-M).